We begin with the raw amino-acid sequence, 141 residues long: Putative nickel-responsive regulator (141 aa).

4 residues coordinate Ni(2+): His80, His91, His93, and Cys99.

Belongs to the transcriptional regulatory CopG/NikR family. It depends on Ni(2+) as a cofactor.

Transcriptional regulator. The sequence is that of Putative nickel-responsive regulator from Methanococcus maripaludis (strain DSM 14266 / JCM 13030 / NBRC 101832 / S2 / LL).